The following is a 489-amino-acid chain: 2-(3-amino-3-carboxypropyl)histidine synthase subunit 2 (489 aa).

N-acetylmethionine is present on M1. Residue S7 is modified to Phosphoserine. The [4Fe-4S] cluster site is built by C89, C110, and C341. Residues 398–489 (PPPESELWDT…AIAYEDEGSG (92 aa)) are required for function. Residue T435 is modified to Phosphothreonine. Residues S446 and S456 each carry the phosphoserine modification. Residue T467 is modified to Phosphothreonine. Phosphoserine is present on S488.

Belongs to the DPH1/DPH2 family. DPH2 subfamily. In terms of assembly, component of the 2-(3-amino-3-carboxypropyl)histidine synthase complex composed of DPH1, DPH2, DPH3 and a NADH-dependent reductase. Interacts with DPH1. The cofactor is [4Fe-4S] cluster.

It participates in protein modification; peptidyl-diphthamide biosynthesis. Required for the first step of diphthamide biosynthesis, a post-translational modification of histidine which occurs in elongation factor 2. DPH1 and DPH2 transfer a 3-amino-3-carboxypropyl (ACP) group from S-adenosyl-L-methionine (SAM) to a histidine residue, the reaction is assisted by a reduction system comprising DPH3 and a NADH-dependent reductase. Facilitates the reduction of the catalytic iron-sulfur cluster found in the DPH1 subunit. This chain is 2-(3-amino-3-carboxypropyl)histidine synthase subunit 2 (DPH2), found in Cricetulus griseus (Chinese hamster).